We begin with the raw amino-acid sequence, 859 residues long: Mycobactin import ATP-binding/permease protein IrtA (859 aa).

Topologically, residues 1-292 (MARGLQGVML…SRLLAPLKLP (292 aa)) are cytoplasmic. An FAD-binding FR-type domain is found at 15-122 (ARDHTATVIE…MSLMGSSRFD (108 aa)). Residues 70–73 (RAYT), 87–91 (DVVLH), and 97–98 (AS) contribute to the FAD site. The disordered stretch occupies residues 247-267 (HRATEPAATEPEVGAAPQPES). Residues 293–313 (LVLSGVLAALVTLAQLAPFVL) form a helical membrane-spanning segment. Residues 293–575 (LVLSGVLAAL…IAYGLGGLRT (283 aa)) enclose the ABC transmembrane type-1 domain. The Periplasmic segment spans residues 314–334 (LVELSRLLVSGAGAHRLFTVG). The chain crosses the membrane as a helical span at residues 335–355 (FAAVGLLGTGALLAAALTLWL). The Cytoplasmic portion of the chain corresponds to 356-408 (HVIDARFARALRLRLLSKLSRLPLGWFTSRGSGSIKKLVTDDTLALHYLVTHA). Residues 409-429 (VPDAVAAVVAPVGVLVYLFVV) traverse the membrane as a helical segment. The Periplasmic portion of the chain corresponds to 430 to 432 (DWR). A helical transmembrane segment spans residues 433–453 (VALVLFGPVLVYLTITSSLTI). The Cytoplasmic segment spans residues 454 to 519 (QSGPRIVQAQ…PLAGKKTLMD (66 aa)). The helical transmembrane segment at 520-540 (LATRPATFLWLIAATGTLLVA) threads the bilayer. Over 541-548 (THRMDPVN) the chain is Periplasmic. A helical transmembrane segment spans residues 549-569 (LLPFMFLGTTFGARLLGIAYG). Residues 570–859 (LGGLRTGLLA…AVAAAQDGTR (290 aa)) are Cytoplasmic-facing. An ABC transporter domain is found at 610–843 (VVFDHVTFGY…GGRYCRLWDT (234 aa)). 643 to 650 (GPSGSGKS) is an ATP binding site.

This sequence belongs to the ABC transporter superfamily. Siderophore-Fe(3+) uptake transporter (SIUT) (TC 3.A.1.21) family. Forms a heterodimer with IrtB. FAD is required as a cofactor.

It localises to the cell inner membrane. Functionally, part of the ABC transporter complex IrtAB involved in the import of iron-bound mycobactin (Fe-MBT) and carboxymycobactin (Fe-cMBT). Mycobactins are then reduced by the siderophore interaction domain to facilitate iron release in the bacterial cell. Transmembrane domains (TMD) form a pore in the membrane and the ATP-binding domain (NBD) is responsible for energy generation. Required for replication in human macrophages and in mouse lungs. The chain is Mycobactin import ATP-binding/permease protein IrtA (irtA) from Mycobacterium tuberculosis (strain ATCC 25618 / H37Rv).